The sequence spans 508 residues: N-acetyl-D-hexosamine oxidase (508 aa).

In terms of domain architecture, FAD-binding PCMH-type spans 26-203 (TDAQAAGRIA…TAYTFARLPE (178 aa)). A cross-link (6-(S-cysteinyl)-8alpha-(pros-histidyl)-FAD (His-Cys)) is located at residues 64–123 (HCYEDFVSNNPDGAIVDLSLLNAPEVRADGTVRIPAGTQNWNGYLELYKRHNLTLPGGSC).

This sequence belongs to the oxygen-dependent FAD-linked oxidoreductase family. FAD is required as a cofactor.

It catalyses the reaction N-acetyl-D-glucosamine + O2 + H2O = N-acetyl-D-glucosaminate + H2O2 + H(+). It carries out the reaction N-acetyl-D-galactosamine + O2 + H2O = N-acetyl-D-galactosaminate + H2O2 + H(+). The enzyme catalyses N-acetyl-D-glucosamine + O2 = N-acetyl-D-glucosamino-1,5-lactone + H2O2. The catalysed reaction is N-acetyl-D-galactosamine + O2 = N-acetyl-D-galactosamino-1,5-lactone + H2O2. In terms of biological role, catalyzes the oxidation of a range of monosaccharides in vitro, displaying the highest activity with N-acetylglucosamine (GlcNAc) and N-acetylgalactosamine (GalNAc), with a reduction of O2 to H2O2. Acts upon the C1 carbon of the GlcNAc or GalNAc molecule, producing the corresponding lactone, which can spontaneously hydrolyze. Its biological function is unclear, but its main function might be connected to extracellular production of hydrogen peroxide to compete with other organisms through oxidative stress, or support the action of peroxidases and peroxygenases. This chain is N-acetyl-D-hexosamine oxidase, found in Ralstonia solanacearum (strain UW551).